A 3625-amino-acid chain; its full sequence is Cubilin (3625 aa).

A signal peptide spans 1 to 20 (MVNNMSLLFLWSLVIFLTFA). Positions 21–36 (ESYGEAGGPELQRHKR) are cleaved as a propeptide — removed in mature form. Residues 43–50 (PRMAAERG) form an interaction with AMN region. A glycan (N-linked (GlcNAc...) asparagine) is linked at Asn106. Residues 133–169 (DGKVCSSNPCQNGATCLNLHDSFFCICPSQWKGPLCS) enclose the EGF-like 1 domain. 6 disulfide bridges follow: Cys137-Cys148, Cys142-Cys157, Cys159-Cys168, Cys175-Cys191, Cys185-Cys200, and Cys202-Cys211. In terms of domain architecture, EGF-like 2; calcium-binding spans 171–212 (DVNECEIYSGTPLGCQNGATCINTPGSYSCLCSPETHGPQCA). Residue Asn257 is glycosylated (N-linked (GlcNAc...) asparagine). Residues 264 to 305 (DRDECSSWPAPCSALVPCFNTLGSFYCGACPTGWQGNGYICE) form the EGF-like 3; calcium-binding domain. Intrachain disulfides connect Cys268–Cys281, Cys275–Cys290, Cys293–Cys304, Cys310–Cys325, Cys317–Cys334, Cys337–Cys348, Cys354–Cys367, Cys361–Cys377, Cys379–Cys393, Cys400–Cys410, Cys405–Cys419, Cys421–Cys430, Cys437–Cys448, Cys442–Cys457, Cys459–Cys468, Cys475–Cys501, Cys528–Cys550, Cys591–Cys617, Cys644–Cys666, and Cys709–Cys734. The EGF-like 4; calcium-binding domain occupies 306 to 349 (DINECEINNGGCSVAPPVECVNTPGSYYCPSCPPGYQGDGRMCT). EGF-like domains follow at residues 350–394 (LIDL…HGCV) and 396–431 (LSNV…MNCT). N-linked (GlcNAc...) asparagine glycosylation is present at Asn429. An EGF-like 7; calcium-binding domain is found at 433 to 469 (NINECLSNPCLNGGTCVDGINAFSCECTRFWTGSLCH). 27 consecutive CUB domains span residues 475-587 (CGGT…WETR), 591-703 (CGGV…YLTT), 709-816 (CGGN…YQVA), 817-928 (CGGE…FSTE), 932-1042 (CGEI…YEAT), 1045-1163 (SAGN…WDGS), 1167-1279 (CGGN…YQQT), 1280-1391 (CDNV…WLVH), 1393-1508 (CGGE…WRAV), 1512-1621 (CGGI…FRQA), 1622-1736 (CGGH…YVAS), 1740-1852 (CGGI…FNNI), 1854-1965 (GNDH…WFAM), 1980-2093 (CGGF…FHKS), 2094-2215 (CGGY…YEAK), 2219-2336 (CGGN…YSIA), 2338-2450 (CGGT…FDSS), 2454-2567 (CGGD…YTSS), 2572-2689 (CGGS…YSFT), 2691-2803 (CGGI…WNTE), 2807-2921 (CGGI…FLSR), 2922-3037 (CGRN…YRIT), 3039-3152 (CGGT…FRET), 3159-3276 (CGGY…YTLL), 3280-3397 (CGGT…IAGC), 3397-3509 (CSRE…WTSS), and 3513-3625 (CGGT…TWAS). 2 N-linked (GlcNAc...) asparagine glycosylation sites follow: Asn712 and Asn749. A disulfide bridge links Cys761 with Cys779. Asn781 carries N-linked (GlcNAc...) asparagine glycosylation. Cys817 and Cys842 are oxidised to a cystine. N-linked (GlcNAc...) asparagine glycosylation is present at Asn857. Disulfide bonds link Cys869–Cys891 and Cys932–Cys958. Asn957 carries N-linked (GlcNAc...) asparagine glycosylation. Position 980 (Glu980) interacts with Ca(2+). The N-linked (GlcNAc...) asparagine glycan is linked to Asn984. A disulfide bridge links Cys985 with Cys1005. Asp988, Asp1027, Asp1029, and Leu1030 together coordinate Ca(2+). Asn1048 carries N-linked (GlcNAc...) asparagine glycosylation. Positions 1097, 1107, and 1148 each coordinate Ca(2+). Cys1104 and Cys1126 are oxidised to a cystine. A disulfide bridge links Cys1167 with Cys1193. N-linked (GlcNAc...) asparagine glycosylation occurs at Asn1170. Glu1215 lines the Ca(2+) pocket. Asn1219 is a glycosylation site (N-linked (GlcNAc...) asparagine). A disulfide bridge links Cys1220 with Cys1242. Residues Asp1223, Asp1264, Gly1266, and Gln1267 each contribute to the Ca(2+) site. The cysteines at positions 1280 and 1308 are disulfide-linked. 3 N-linked (GlcNAc...) asparagine glycosylation sites follow: Asn1287, Asn1309, and Asn1321. Glu1330 is a binding site for Ca(2+). N-linked (GlcNAc...) asparagine glycosylation is present at Asn1334. Residues Cys1335 and Cys1353 are joined by a disulfide bond. Asp1338, Asp1375, and Val1377 together coordinate Ca(2+). 2 cysteine pairs are disulfide-bonded: Cys1393–Cys1419 and Cys1446–Cys1468. N-linked (GlcNAc...) asparagine glycosylation occurs at Asn1502. Cysteines 1512 and 1538 form a disulfide. An N-linked (GlcNAc...) asparagine glycan is attached at Asn1553. 5 disulfide bridges follow: Cys1565–Cys1583, Cys1622–Cys1649, Cys1677–Cys1699, Cys1740–Cys1766, and Cys1793–Cys1814. Asn1648 is a glycosylation site (N-linked (GlcNAc...) asparagine). N-linked (GlcNAc...) asparagine glycans are attached at residues Asn1804, Asn1821, and Asn1887. Disulfide bonds link Cys1907-Cys1929, Cys1980-Cys2008, and Cys2034-Cys2056. N-linked (GlcNAc...) asparagine glycans are attached at residues Asn2087 and Asn2119. Cystine bridges form between Cys2094/Cys2120 and Cys2219/Cys2249. A glycan (N-linked (GlcNAc...) asparagine) is linked at Asn2276. Intrachain disulfides connect Cys2277-Cys2299 and Cys2338-Cys2365. 2 N-linked (GlcNAc...) asparagine glycosylation sites follow: Asn2388 and Asn2402. 3 disulfides stabilise this stretch: Cys2392/Cys2413, Cys2454/Cys2480, and Cys2507/Cys2529. Residues Asn2533, Asn2583, Asn2594, and Asn2612 are each glycosylated (N-linked (GlcNAc...) asparagine). Cys2572 and Cys2601 are joined by a disulfide. 5 disulfide bridges follow: Cys2630–Cys2651, Cys2691–Cys2717, Cys2744–Cys2766, Cys2807–Cys2833, and Cys2862–Cys2885. 4 N-linked (GlcNAc...) asparagine glycosylation sites follow: Asn2887, Asn2925, Asn2928, and Asn2947. 2 disulfides stabilise this stretch: Cys2922–Cys2948 and Cys2979–Cys3001. Residue Thr3010 is modified to Phosphothreonine. Cystine bridges form between Cys3039–Cys3066 and Cys3093–Cys3115. N-linked (GlcNAc...) asparagine glycosylation is found at Asn3044, Asn3105, and Asn3127. 2 cysteine pairs are disulfide-bonded: Cys3159–Cys3187 and Cys3217–Cys3239. Residues Asn3270 and Asn3285 are each glycosylated (N-linked (GlcNAc...) asparagine). Disulfide bonds link Cys3280–Cys3308 and Cys3334–Cys3356. Asn3359 carries N-linked (GlcNAc...) asparagine glycosylation. Cys3397 and Cys3423 are joined by a disulfide. Residues Asn3432, Asn3459, and Asn3535 are each glycosylated (N-linked (GlcNAc...) asparagine). 3 disulfides stabilise this stretch: Cys3450–Cys3472, Cys3513–Cys3539, and Cys3566–Cys3588.

As to quaternary structure, interacts with AMN. Component of the cubam complex composed of one CUBN trimer and one AMN chain. The cubam complex can dimerize. Interacts with LRP2 in a dual-receptor complex in a calcium-dependent manner. Found in a complex with PID1/PCLI1, LRP1 and CUBNI. Interacts with LRP1 and PID1/PCLI1. In terms of processing, the precursor is cleaved by a trans-Golgi proteinase furin, removing a propeptide. N-glycosylated. Detected in kidney cortex (at protein level).

It is found in the apical cell membrane. The protein localises to the cell membrane. Its subcellular location is the membrane. It localises to the coated pit. The protein resides in the endosome. It is found in the lysosome membrane. Functionally, endocytic receptor which plays a role in lipoprotein, vitamin and iron metabolism by facilitating their uptake. Acts together with LRP2 to mediate endocytosis of high-density lipoproteins, GC, hemoglobin, ALB, TF and SCGB1A1. Acts together with AMN to mediate endocytosis of the CBLIF-cobalamin complex. Binds to ALB, MB, Kappa and lambda-light chains, TF, hemoglobin, GC, SCGB1A1, APOA1, high density lipoprotein, and the CBLIF-cobalamin complex. Ligand binding requires calcium. Serves as important transporter in several absorptive epithelia, including intestine, renal proximal tubules and embryonic yolk sac. May play an important role in the development of the peri-implantation embryo through internalization of APOA1 and cholesterol. Binds to LGALS3 at the maternal-fetal interface. The chain is Cubilin (CUBN) from Sus scrofa (Pig).